Consider the following 356-residue polypeptide: Methylthioribose-1-phosphate isomerase (356 aa).

Aspartate 234 acts as the Proton donor in catalysis.

It belongs to the eIF-2B alpha/beta/delta subunits family. MtnA subfamily.

The protein localises to the cytoplasm. It localises to the nucleus. It catalyses the reaction 5-(methylsulfanyl)-alpha-D-ribose 1-phosphate = 5-(methylsulfanyl)-D-ribulose 1-phosphate. The protein operates within amino-acid biosynthesis; L-methionine biosynthesis via salvage pathway; L-methionine from S-methyl-5-thio-alpha-D-ribose 1-phosphate: step 1/6. In terms of biological role, catalyzes the interconversion of methylthioribose-1-phosphate (MTR-1-P) into methylthioribulose-1-phosphate (MTRu-1-P). This is Methylthioribose-1-phosphate isomerase (mri1) from Schizosaccharomyces japonicus (strain yFS275 / FY16936) (Fission yeast).